Here is a 1644-residue protein sequence, read N- to C-terminus: Terminal uridylyltransferase 4 (1644 aa).

3 disordered regions span residues 31 to 63, 96 to 168, and 205 to 257; these read NQTL…QNDI, CKAK…SLLL, and ALQN…EMDY. Residues 36 to 46 show a composition bias toward basic and acidic residues; the sequence is ARNDKSVKEIE. Phosphoserine is present on Ser-104. Over residues 112-125 the composition is skewed to polar residues; that stretch reads TISQAKSEKATSLQ. Residues Ser-134 and Ser-156 each carry the phosphoserine modification. Polar residues predominate over residues 206–222; the sequence is LQNSPRSQKQQTCTDNT. A compositionally biased stretch (basic and acidic residues) spans 238–252; sequence DLSKMKNDESNKENS. Residues 253-333 form a required for interaction with LIN28A and pre-let-7 RNA region; the sequence is SEMDYLENAT…KEKRHKKNIL (81 aa). Zn(2+) is bound by residues Cys-306, Cys-309, His-322, and His-328. The interval 579 to 617 is disordered; sequence EKNSIAEENKAKADQPKDDTKKTETDNQSNAMKEKHGKS. Basic and acidic residues predominate over residues 582 to 603; sequence SIAEENKAKADQPKDDTKKTET. In terms of domain architecture, PAP-associated 1 spans 628 to 678; it reads SLGQLWLELLKFYTLDFALEEYVICVRIQDILTRENKNWPKRRIAIEDPFS. The tract at residues 794–816 is disordered; it reads GQDSSSLSTSKSSEIEPKLDKKQ. Residues 806-816 are compositionally biased toward basic and acidic residues; the sequence is SEIEPKLDKKQ. Residues 901 to 1634 form a sufficient for monouridylation activity region; the sequence is DKFILTSGKP…CATRRCRERC (734 aa). A CCHC-type 1 zinc finger spans residues 913–930; the sequence is IVCSICKKDGHSKNDCPE. Residues 998–1001, 1008–1011, Asn-1081, Lys-1103, 1121–1125, and His-1237 each bind UTP; these read SSKN, SDLD, and SYAYI. Mg(2+) is bound by residues Asp-1009 and Asp-1011. One can recognise a PAP-associated 2 domain in the interval 1184–1237; that stretch reads SLGELWLGLLRFYTEEFDFKEYVISIRQKKLLTTFEKQWTSKCIAIEDPFDLNH. The CCHC-type 2 zinc-finger motif lies at 1293–1310; the sequence is RCCRVCGKIGHYMKDCPK. The disordered stretch occupies residues 1321–1348; the sequence is KDSEEEKEGNEEEKDSRDVLDPRDLHDT. Basic and acidic residues predominate over residues 1334-1348; that stretch reads KDSRDVLDPRDLHDT. The segment at 1357–1374 adopts a CCHC-type 3 zinc-finger fold; that stretch reads LRCFICGDAGHVRRECPE. Low complexity predominate over residues 1401–1426; that stretch reads AGSAQQQGDQSIRTRQSSECSESPSY. The tract at residues 1401-1482 is disordered; sequence AGSAQQQGDQ…LYNFPQSPPA (82 aa). The segment covering 1441–1452 has biased composition (polar residues); sequence AAITQPSSQPGS. Low complexity predominate over residues 1453–1470; the sequence is QPKLGPPQQGAQPPHQVQ. Residue Arg-1624 is modified to Omega-N-methylarginine.

Belongs to the DNA polymerase type-B-like family. As to quaternary structure, interacts with LIN28A in the presence of pre-let-7 RNA. Interacts with T2BP. Interacts with MOV10; the interaction is RNA-dependent. Mg(2+) serves as cofactor. Mn(2+) is required as a cofactor.

It is found in the nucleus. The protein resides in the cytoplasm. Its subcellular location is the cytoplasmic ribonucleoprotein granule. The enzyme catalyses RNA(n) + UTP = RNA(n)-3'-uridine ribonucleotide + diphosphate. Its function is as follows. Uridylyltransferase that mediates the terminal uridylation of mRNAs with short (less than 25 nucleotides) poly(A) tails, hence facilitating global mRNA decay. Essential for both oocyte maturation and fertility. Through 3' terminal uridylation of mRNA, sculpts, with TUT7, the maternal transcriptome by eliminating transcripts during oocyte growth. Involved in microRNA (miRNA)-induced gene silencing through uridylation of deadenylated miRNA targets. Also functions as an integral regulator of microRNA biogenesis using 3 different uridylation mechanisms. Acts as a suppressor of miRNA biogenesis by mediating the terminal uridylation of some miRNA precursors, including that of let-7 (pre-let-7), miR107, miR-143 and miR-200c. Uridylated miRNAs are not processed by Dicer and undergo degradation. Degradation of pre-let-7 contributes to the maintenance of embryonic stem (ES) cell pluripotency. Also catalyzes the 3' uridylation of miR-26A, a miRNA that targets IL6 transcript. This abrogates the silencing of IL6 transcript, hence promoting cytokine expression. In the absence of LIN28A, TUT7 and TUT4 monouridylate group II pre-miRNAs, which includes most of pre-let7 members, that shapes an optimal 3' end overhang for efficient processing. Adds oligo-U tails to truncated pre-miRNAS with a 5' overhang which may promote rapid degradation of non-functional pre-miRNA species. May also suppress Toll-like receptor-induced NF-kappa-B activation via binding to T2BP. Does not play a role in replication-dependent histone mRNA degradation. Due to functional redundancy between TUT4 and TUT7, the identification of the specific role of each of these proteins is difficult. TUT4 and TUT7 restrict retrotransposition of long interspersed element-1 (LINE-1) in cooperation with MOV10 counteracting the RNA chaperonne activity of L1RE1. TUT7 uridylates LINE-1 mRNAs in the cytoplasm which inhibits initiation of reverse transcription once in the nucleus, whereas uridylation by TUT4 destabilizes mRNAs in cytoplasmic ribonucleoprotein granules. This Homo sapiens (Human) protein is Terminal uridylyltransferase 4.